Reading from the N-terminus, the 557-residue chain is Organic cation/carnitine transporter 2 (557 aa).

Residues 1-20 (MRDYDEVTAFLGEWGPFQRL) are Cytoplasmic-facing. Residues 21-41 (IFFLLSASIIPNGFNGMSIVF) form a helical membrane-spanning segment. Residues 42-142 (LAGTPEHRCL…DLVCKDDWKA (101 aa)) lie on the Extracellular side of the membrane. Residues Asn57, Asn64, and Asn91 are each glycosylated (N-linked (GlcNAc...) asparagine). A helical transmembrane segment spans residues 143–163 (PLTTSLFFVGVLMGSFISGQL). At 164 to 172 (SDRFGRKNV) the chain is on the cytoplasmic side. The helical transmembrane segment at 173 to 193 (LFLTMGMQTGFSFLQVFSVNF) threads the bilayer. Over 194-197 (EMFT) the chain is Extracellular. A helical membrane pass occupies residues 198-218 (VLFVLVGMGQISNYVAAFVLG). 218 to 225 (GTEILSKS) contacts ATP. The Cytoplasmic portion of the chain corresponds to 219–232 (TEILSKSIRIIFAT). The chain crosses the membrane as a helical span at residues 233–253 (LGVCIFYAFGFMVLPLFAYFI). The Extracellular segment spans residues 254 to 257 (RDWR). Residues 258–278 (MLLLALTVPGVLCGALWWFIP) form a helical membrane-spanning segment. At 279–341 (ESPRWLISQG…YDLIRTRNIR (63 aa)) the chain is on the cytoplasmic side. Residues 342-362 (VITIMSIILWLTISVGYFGLS) form a helical membrane-spanning segment. The Extracellular segment spans residues 363 to 373 (LDTPNLHGDIY). A helical membrane pass occupies residues 374–394 (VNCFLLAAVEVPAYVLAWLLL). Residues 395–406 (QYLPRRYSISAA) lie on the Cytoplasmic side of the membrane. The chain crosses the membrane as a helical span at residues 407–427 (LFLGGSVLLFMQLVPSELFYL). Topologically, residues 428–430 (STA) are extracellular. A helical transmembrane segment spans residues 431–451 (LVMVGKFGITSAYSMVYVYTA). Over 452-462 (ELYPTVVRNMG) the chain is Cytoplasmic. A helical transmembrane segment spans residues 463-483 (VGVSSTASRLGSILSPYFVYL). Residues 484-488 (GAYDR) are Extracellular-facing. The residue at position 486 (Tyr486) is a Phosphotyrosine. Residues 489 to 509 (FLPYILMGSLTILTAILTLFF) traverse the membrane as a helical segment. Over 510–557 (PESFGVPLPDTIDQMLRVKGIKQWQIQSQTRMQKDGEESPTVLKSTAF) the chain is Cytoplasmic. A Phosphoserine modification is found at Ser548. Residue Thr550 is modified to Phosphothreonine.

Belongs to the major facilitator (TC 2.A.1) superfamily. Organic cation transporter (TC 2.A.1.19) family. As to quaternary structure, interacts with PDZK1. As to expression, widely expressed. Expressed in kidney, liver and testis. Expressed at the brush border of the small, large intestine and colon (at protein level).

It is found in the apical cell membrane. The protein localises to the basal cell membrane. It localises to the cell membrane. It catalyses the reaction (R)-carnitine(out) + Na(+)(out) = (R)-carnitine(in) + Na(+)(in). The catalysed reaction is glycine betaine(out) + Na(+)(out) = glycine betaine(in) + Na(+)(in). It carries out the reaction glycine betaine(out) + (R)-carnitine(in) = glycine betaine(in) + (R)-carnitine(out). The enzyme catalyses O-butanoyl-(R)-carnitine(out) + Na(+)(out) = O-butanoyl-(R)-carnitine(in) + Na(+)(in). It catalyses the reaction O-acetyl-(R)-carnitine(out) + Na(+)(out) = O-acetyl-(R)-carnitine(in) + Na(+)(in). The catalysed reaction is O-propanoyl-(R)-carnitine(out) + Na(+)(out) = O-propanoyl-(R)-carnitine(in) + Na(+)(in). It carries out the reaction (S)-carnitine(out) + Na(+)(out) = (S)-carnitine(in) + Na(+)(in). The enzyme catalyses an O-acyl-(R)-carnitine(out) + Na(+)(out) = an O-acyl-(R)-carnitine(in) + Na(+)(in). It catalyses the reaction L-glutamyl-L-arginyl-glycyl-L-methionyl-L-threonine(out) + Na(+)(out) = L-glutamyl-L-arginyl-glycyl-L-methionyl-L-threonine(in) + Na(+)(in). The catalysed reaction is N,N-dimethylglycine(out) + Na(+)(out) = N,N-dimethylglycine(in) + Na(+)(in). With respect to regulation, inhibited by emetine, quinidine and verapamil. The IC(50) of emetine is 4.2 uM. Not inhibited by valproic acid. Transport of (R)-carnitine is stimulated by cholesterol in the plasma membrane. Sodium-ion dependent, high affinity carnitine transporter. Involved in the active cellular uptake of carnitine. Transports one sodium ion with one molecule of carnitine. Also transports organic cations such as tetraethylammonium (TEA) without the involvement of sodium. Also relative uptake activity ratio of carnitine to TEA is 11.3. May also contribute to regulate the transport of organic compounds in testis across the blood-testis-barrier. In Mus musculus (Mouse), this protein is Organic cation/carnitine transporter 2.